The sequence spans 669 residues: Dymeclin (669 aa).

Glycine 2 is lipidated: N-myristoyl glycine.

It belongs to the dymeclin family. In terms of processing, myristoylated in vitro; myristoylation is not essential for protein targeting to Golgi compartment.

The protein resides in the cytoplasm. It is found in the golgi apparatus. Functionally, necessary for correct organization of Golgi apparatus. The sequence is that of Dymeclin (DYM) from Gallus gallus (Chicken).